Reading from the N-terminus, the 125-residue chain is Histone H2A (125 aa).

Basic residues predominate over residues Met1 to Ser18. The disordered stretch occupies residues Met1–Leu23. Ser2 is subject to N-acetylserine. Gln104 bears the N5-methylglutamine mark.

It belongs to the histone H2A family. The nucleosome is a histone octamer containing two molecules each of H2A, H2B, H3 and H4 assembled in one H3-H4 heterotetramer and two H2A-H2B heterodimers. The octamer wraps approximately 147 bp of DNA.

Its subcellular location is the nucleus. It localises to the chromosome. In terms of biological role, core component of nucleosome. Nucleosomes wrap and compact DNA into chromatin, limiting DNA accessibility to the cellular machineries which require DNA as a template. Histones thereby play a central role in transcription regulation, DNA repair, DNA replication and chromosomal stability. DNA accessibility is regulated via a complex set of post-translational modifications of histones, also called histone code, and nucleosome remodeling. The protein is Histone H2A of Sepia officinalis (Common cuttlefish).